Consider the following 105-residue polypeptide: Ketoisovalerate oxidoreductase subunit VorD (105 aa).

4Fe-4S ferredoxin-type domains follow at residues 44 to 73 and 74 to 103; these read FMPVIDESKCVKCYICWKFCPEPAIYIKED and GFVAIDYDYCKGCGICANECPTKAITMVRE. [4Fe-4S] cluster-binding residues include C53, C56, C59, C63, C83, C86, C89, and C93.

In terms of assembly, heterotetramer of one alpha, one beta, one delta and one gamma chain. [4Fe-4S] cluster serves as cofactor.

It catalyses the reaction 3-methyl-2-oxobutanoate + 2 oxidized [2Fe-2S]-[ferredoxin] + CoA = 2-methylpropanoyl-CoA + 2 reduced [2Fe-2S]-[ferredoxin] + CO2 + H(+). In Pyrococcus abyssi (strain GE5 / Orsay), this protein is Ketoisovalerate oxidoreductase subunit VorD (vorD).